A 541-amino-acid polypeptide reads, in one-letter code: Chaperonin GroEL (541 aa).

Residues 29–32 (TLGP), 86–90 (DGTTT), Gly413, 477–479 (DAL), and Asp493 contribute to the ATP site.

Belongs to the chaperonin (HSP60) family. Forms a cylinder of 14 subunits composed of two heptameric rings stacked back-to-back. Interacts with the co-chaperonin GroES.

It is found in the cytoplasm. The enzyme catalyses ATP + H2O + a folded polypeptide = ADP + phosphate + an unfolded polypeptide.. In terms of biological role, together with its co-chaperonin GroES, plays an essential role in assisting protein folding. The GroEL-GroES system forms a nano-cage that allows encapsulation of the non-native substrate proteins and provides a physical environment optimized to promote and accelerate protein folding. This chain is Chaperonin GroEL, found in Clostridium botulinum (strain ATCC 19397 / Type A).